Here is a 415-residue protein sequence, read N- to C-terminus: Ankyrin repeat domain-containing protein 10 (415 aa).

ANK repeat units follow at residues S20–L49, Y56–V85, Y90–K119, and E123–L152. Positions T303 to G325 are enriched in polar residues. The segment at T303 to E330 is disordered.

This chain is Ankyrin repeat domain-containing protein 10 (Ankrd10), found in Mus musculus (Mouse).